We begin with the raw amino-acid sequence, 234 residues long: 7-cyano-7-deazaguanine synthase (234 aa).

13-23 (FSGGIDSTTCL) provides a ligand contact to ATP. Cys197, Cys207, Cys210, and Cys213 together coordinate Zn(2+).

Belongs to the QueC family. It depends on Zn(2+) as a cofactor.

It catalyses the reaction 7-carboxy-7-deazaguanine + NH4(+) + ATP = 7-cyano-7-deazaguanine + ADP + phosphate + H2O + H(+). It functions in the pathway purine metabolism; 7-cyano-7-deazaguanine biosynthesis. Catalyzes the ATP-dependent conversion of 7-carboxy-7-deazaguanine (CDG) to 7-cyano-7-deazaguanine (preQ(0)). This Syntrophobacter fumaroxidans (strain DSM 10017 / MPOB) protein is 7-cyano-7-deazaguanine synthase.